The chain runs to 248 residues: ATP synthase subunit a, chloroplastic (248 aa).

A run of 5 helical transmembrane segments spans residues Gln38–Val58, Val96–Leu116, Ile135–Ser155, Leu200–Leu220, and Gly221–Gly241.

Belongs to the ATPase A chain family. In terms of assembly, F-type ATPases have 2 components, CF(1) - the catalytic core - and CF(0) - the membrane proton channel. CF(1) has five subunits: alpha(3), beta(3), gamma(1), delta(1), epsilon(1). CF(0) has four main subunits: a, b, b' and c.

The protein localises to the plastid. It is found in the chloroplast thylakoid membrane. Functionally, key component of the proton channel; it plays a direct role in the translocation of protons across the membrane. In Amborella trichopoda, this protein is ATP synthase subunit a, chloroplastic.